We begin with the raw amino-acid sequence, 41 residues long: Large ribosomal subunit protein bL36 (41 aa).

Belongs to the bacterial ribosomal protein bL36 family.

This chain is Large ribosomal subunit protein bL36, found in Phenylobacterium zucineum (strain HLK1).